We begin with the raw amino-acid sequence, 296 residues long: ATP synthase peripheral stalk subunit OSCP, mitochondrial (296 aa).

The protein belongs to the ATPase delta chain family. In terms of assembly, component of the ATP synthase complex composed at least of ATP5F1A/subunit alpha, ATP5F1B/subunit beta, ATP5MC1/subunit c (homooctomer), MT-ATP6/subunit a, MT-ATP8/subunit 8, ATP5ME/subunit e, ATP5MF/subunit f, ATP5MG/subunit g, ATP5MK/subunit k, ATP5MJ/subunit j, ATP5F1C/subunit gamma, ATP5F1D/subunit delta, ATP5F1E/subunit epsilon, ATP5PF/subunit F6, ATP5PB/subunit b, ATP5PD/subunit d, ATP5PO/subunit OSCP. ATP synthase complex consists of a soluble F(1) head domain (subunits alpha(3) and beta(3)) - the catalytic core - and a membrane F(0) domain - the membrane proton channel (subunits c, a, 8, e, f, g, k and j). These two domains are linked by a central stalk (subunits gamma, delta, and epsilon) rotating inside the F1 region and a stationary peripheral stalk (subunits F6, b, d, and OSCP).

Its subcellular location is the mitochondrion. It localises to the mitochondrion inner membrane. Its function is as follows. Subunit OSCP, of the mitochondrial membrane ATP synthase complex (F(1)F(0) ATP synthase or Complex V) that produces ATP from ADP in the presence of a proton gradient across the membrane which is generated by electron transport complexes of the respiratory chain. ATP synthase complex consist of a soluble F(1) head domain - the catalytic core - and a membrane F(1) domain - the membrane proton channel. These two domains are linked by a central stalk rotating inside the F(1) region and a stationary peripheral stalk. During catalysis, ATP synthesis in the catalytic domain of F(1) is coupled via a rotary mechanism of the central stalk subunits to proton translocation. In vivo, can only synthesize ATP although its ATP hydrolase activity can be activated artificially in vitro. Part of the complex F(0) domain. Part of the complex F(0) domain and the peripheric stalk, which acts as a stator to hold the catalytic alpha(3)beta(3) subcomplex and subunit a/ATP6 static relative to the rotary elements. The chain is ATP synthase peripheral stalk subunit OSCP, mitochondrial from Dictyostelium discoideum (Social amoeba).